The sequence spans 531 residues: Bifunctional aspartate aminotransferase and L-aspartate beta-decarboxylase (531 aa).

2 residues coordinate L-aspartate: G114 and N255. K314 is subject to N6-(pyridoxal phosphate)lysine. R496 lines the L-aspartate pocket.

It belongs to the class-I pyridoxal-phosphate-dependent aminotransferase family. In terms of assembly, homododecamer. Requires pyridoxal 5'-phosphate as cofactor.

The catalysed reaction is L-aspartate + H(+) = L-alanine + CO2. It carries out the reaction L-aspartate + 2-oxoglutarate = oxaloacetate + L-glutamate. Its activity is regulated as follows. Inhibited by 10 mM Co(2+), Mn(2+) and Ni(2+), and by 1 mM Cu(2+) and Hg(2+). Bifunctional enzyme that has both L-aspartate decarboxylase and transaminase activity. Has high activity with L-aspartate, and much lower activity with D-aspartate, L-lysine and L-glutamine. This chain is Bifunctional aspartate aminotransferase and L-aspartate beta-decarboxylase, found in Pseudomonas sp.